A 193-amino-acid chain; its full sequence is Oleosin S1-2 (193 aa).

Position 2 is an N-acetylalanine (alanine 2). The tract at residues 2–39 is polar; that stretch reads ADVRTHAHQVQVHPLRQHEGGIKVVYPQSGPSSTQVLA. 3 helical membrane passes run 37–57, 66–86, and 87–107; these read VLAVVAGVPVGGTLLTLAGLT, ILAFPLFLIFSPVIVPAAFVI, and GLAMTGFMASGAIGLTGLSSM. Residues 40 to 113 are hydrophobic; the sequence is VVAGVPVGGT…LSSMSWVLNH (74 aa). Residues 139–193 are disordered; sequence AGQRTKDAGQTIEDKAHDVRESKTYDVRDRDTKGHTASGGDRDTKTTREVRVATT. Basic and acidic residues predominate over residues 142 to 193; sequence RTKDAGQTIEDKAHDVRESKTYDVRDRDTKGHTASGGDRDTKTTREVRVATT.

Belongs to the oleosin family.

It is found in the lipid droplet. The protein localises to the membrane. May have a structural role to stabilize the lipid body during desiccation of the seed by preventing coalescence of the oil. Probably interacts with both lipid and phospholipid moieties of lipid bodies. May also provide recognition signals for specific lipase anchorage in lipolysis during seedling growth. This Brassica napus (Rape) protein is Oleosin S1-2 (S1).